Here is a 330-residue protein sequence, read N- to C-terminus: 3'-5' exonuclease (330 aa).

A disordered region spans residues 1 to 92 (MDQYLIKMST…DGTPSPEKEI (92 aa)). Basic and acidic residues-rich tracts occupy residues 27–39 (NTTR…KEKI) and 48–66 (KDTP…ENPP). Ser79 and Ser87 each carry phosphoserine. Residues 117-289 (SADEVMQWVE…IGQVIYRDIE (173 aa)) enclose the 3'-5' exonuclease domain. Asp139, Glu141, and Asp277 together coordinate Mg(2+).

This sequence belongs to the WRNexo family.

Its subcellular location is the nucleus. Its function is as follows. Has exonuclease activity on both single-stranded and duplex templates bearing overhangs, but not blunt ended duplex DNA, and cleaves in a 3'-5' direction. Essential for the formation of DNA replication focal centers. Has an important role in maintaining genome stability. The polypeptide is 3'-5' exonuclease (Drosophila virilis (Fruit fly)).